A 259-amino-acid polypeptide reads, in one-letter code: GTP cyclohydrolase FolE2 (259 aa).

This sequence belongs to the GTP cyclohydrolase IV family.

The catalysed reaction is GTP + H2O = 7,8-dihydroneopterin 3'-triphosphate + formate + H(+). It functions in the pathway cofactor biosynthesis; 7,8-dihydroneopterin triphosphate biosynthesis; 7,8-dihydroneopterin triphosphate from GTP: step 1/1. In terms of biological role, converts GTP to 7,8-dihydroneopterin triphosphate. The chain is GTP cyclohydrolase FolE2 from Halorhodospira halophila (strain DSM 244 / SL1) (Ectothiorhodospira halophila (strain DSM 244 / SL1)).